A 148-amino-acid chain; its full sequence is Probable histone H2B.2 (148 aa).

Residues 1–32 (MAPKGEKKPAEKKPAEEKKSTVAEKAPAEKKP) are compositionally biased toward basic and acidic residues. The disordered stretch occupies residues 1 to 57 (MAPKGEKKPAEKKPAEEKKSTVAEKAPAEKKPKAGKKLPKEGGSAAGEKKKKRSKKS). Residues Lys-7, Lys-36, and Lys-37 each carry the N6-acetyllysine modification. Residue Lys-144 forms a Glycyl lysine isopeptide (Lys-Gly) (interchain with G-Cter in ubiquitin) linkage.

This sequence belongs to the histone H2B family. The nucleosome is a histone octamer containing two molecules each of H2A, H2B, H3 and H4 assembled in one H3-H4 heterotetramer and two H2A-H2B heterodimers. The octamer wraps approximately 147 bp of DNA. Can be acetylated to form H2BK6ac, H2BK33ac and H2BK34ac. In terms of processing, monoubiquitinated to form H2BK143ub1; may give a specific tag for epigenetic transcriptional activation.

It is found in the nucleus. Its subcellular location is the chromosome. Core component of nucleosome. Nucleosomes wrap and compact DNA into chromatin, limiting DNA accessibility to the cellular machineries which require DNA as a template. Histones thereby play a central role in transcription regulation, DNA repair, DNA replication and chromosomal stability. DNA accessibility is regulated via a complex set of post-translational modifications of histones, also called histone code, and nucleosome remodeling. The protein is Probable histone H2B.2 of Medicago truncatula (Barrel medic).